A 549-amino-acid polypeptide reads, in one-letter code: MAELTISANDIQSAIEEYVGSFTSDTSREEVGTVVDAGDGIAHVEGLPSVMTQELLEFPGGVLGVALNLDEHSVGAVILGNSENIEEGQQVKRTGEVLSVPVGDAFLGRVINPLGQPIDGRGDIKAETRRALELQAPSVVQRQSVKEPLQTGIKAIDAMTPIGRGQRQLIIGDRKTGKTAVCVDTILNQRQNWETGDPKKQVRCVYVAVGQKGTTIASVRRALEEGGAMDYTTIVAAPASDSAGFKWLAPYTGSAVAQHWMYDGKHVLIVFDDLTKQAEAYRAISLLLRRPPGREAYPGDVFYLHSRLLERCAKLSDELGGGSLTGLPIIETKANDISAYIPTNVISITDGQCFLETDLFNQGVRPAINVGVSVSRVGGAAQIKAIKEVAGSLRLDLSQYRELEAFAAFASDLDATSKAQLDRGARLVELLKQPQYQPMPVEEQVISIFLGTGGHLDSVPVEDVRRFETELLDHIRASEENLLSTIRDTQKLTEETEEALTKVINHFKKGFASSTGESVVPDEHVEAMDEEDLGKESVKVKKPAPQKKK.

172 to 179 (GDRKTGKT) is a binding site for ATP. Residues 513 to 549 (SSTGESVVPDEHVEAMDEEDLGKESVKVKKPAPQKKK) are disordered. Positions 540-549 (VKKPAPQKKK) are enriched in basic residues.

It belongs to the ATPase alpha/beta chains family. In terms of assembly, F-type ATPases have 2 components, CF(1) - the catalytic core - and CF(0) - the membrane proton channel. CF(1) has five subunits: alpha(3), beta(3), gamma(1), delta(1), epsilon(1). CF(0) has three main subunits: a(1), b(2) and c(9-12). The alpha and beta chains form an alternating ring which encloses part of the gamma chain. CF(1) is attached to CF(0) by a central stalk formed by the gamma and epsilon chains, while a peripheral stalk is formed by the delta and b chains.

The protein resides in the cell membrane. The catalysed reaction is ATP + H2O + 4 H(+)(in) = ADP + phosphate + 5 H(+)(out). Functionally, produces ATP from ADP in the presence of a proton gradient across the membrane. The alpha chain is a regulatory subunit. This Mycobacterium ulcerans (strain Agy99) protein is ATP synthase subunit alpha.